A 333-amino-acid polypeptide reads, in one-letter code: Phosphate acyltransferase (333 aa).

Belongs to the PlsX family. In terms of assembly, homodimer. Probably interacts with PlsY.

It is found in the cytoplasm. The enzyme catalyses a fatty acyl-[ACP] + phosphate = an acyl phosphate + holo-[ACP]. The protein operates within lipid metabolism; phospholipid metabolism. In terms of biological role, catalyzes the reversible formation of acyl-phosphate (acyl-PO(4)) from acyl-[acyl-carrier-protein] (acyl-ACP). This enzyme utilizes acyl-ACP as fatty acyl donor, but not acyl-CoA. The chain is Phosphate acyltransferase from Pelagibacter ubique (strain HTCC1062).